Consider the following 336-residue polypeptide: Glyceraldehyde-3-phosphate dehydrogenase (336 aa).

NAD(+)-binding positions include 12-13 (RI), aspartate 34, arginine 78, and threonine 121. Residues 151 to 153 (SCT), threonine 182, arginine 199, 212 to 213 (TG), and arginine 235 each bind D-glyceraldehyde 3-phosphate. Residue cysteine 152 is the Nucleophile of the active site. Asparagine 316 contributes to the NAD(+) binding site.

The protein belongs to the glyceraldehyde-3-phosphate dehydrogenase family. Homotetramer.

The protein localises to the cytoplasm. The enzyme catalyses D-glyceraldehyde 3-phosphate + phosphate + NAD(+) = (2R)-3-phospho-glyceroyl phosphate + NADH + H(+). It participates in carbohydrate degradation; glycolysis; pyruvate from D-glyceraldehyde 3-phosphate: step 1/5. Its function is as follows. Also binds human plasminogen. Functionally, catalyzes the oxidative phosphorylation of glyceraldehyde 3-phosphate (G3P) to 1,3-bisphosphoglycerate (BPG) using the cofactor NAD. The first reaction step involves the formation of a hemiacetal intermediate between G3P and a cysteine residue, and this hemiacetal intermediate is then oxidized to a thioester, with concomitant reduction of NAD to NADH. The reduced NADH is then exchanged with the second NAD, and the thioester is attacked by a nucleophilic inorganic phosphate to produce BPG. The polypeptide is Glyceraldehyde-3-phosphate dehydrogenase (gap) (Streptococcus pyogenes).